The following is a 242-amino-acid chain: Octanoyltransferase (242 aa).

A BPL/LPL catalytic domain is found at 31–206 (SQTTDEIWFL…LFLKNFGYNQ (176 aa)). Substrate is bound by residues 70–77 (RGGQVTYH), 137–139 (SIG), and 150–152 (GLA). C168 serves as the catalytic Acyl-thioester intermediate.

Belongs to the LipB family.

The protein resides in the cytoplasm. It carries out the reaction octanoyl-[ACP] + L-lysyl-[protein] = N(6)-octanoyl-L-lysyl-[protein] + holo-[ACP] + H(+). It participates in protein modification; protein lipoylation via endogenous pathway; protein N(6)-(lipoyl)lysine from octanoyl-[acyl-carrier-protein]: step 1/2. Its function is as follows. Catalyzes the transfer of endogenously produced octanoic acid from octanoyl-acyl-carrier-protein onto the lipoyl domains of lipoate-dependent enzymes. Lipoyl-ACP can also act as a substrate although octanoyl-ACP is likely to be the physiological substrate. This chain is Octanoyltransferase, found in Coxiella burnetii (strain CbuK_Q154) (Coxiella burnetii (strain Q154)).